The following is an 864-amino-acid chain: MYMARCGPKNNVLCFPFQLSFLFSKRLINKRFKYTLQTEDEKDMMGSLSKNKIITPEDVEFKLAQLREFSNTLKERIHNTKSVNSDGHQSNSIAPISEDSRNVNVTKISSVPNEEKSKNLSDLIHSSFLEKMDHLVPKVIRERVADDDILAKNLFDRSHSNWAPVIDRLYVSEKRFMDIDSREFSVWLNGTVKYLPFHSILHLDEMLLEQINGDVVKFNTHMYECIFNNLGNLKPTNFNQDGTNDKVILKMKELLERYDKALKITEERINKKEGFPCKVPKMTQAILNNCLKYSTKCSSFHDMDYFITKFRDDYGITPNKQNLTTVIQFYSRKEMTKQAWNTFDTMKFLSTKHFPDICTYNTMLRICEKERNFPKALDLFQEIQDHNIKPTTNTYIMMARVLASSSSNAVVSEGKSDSLRLLGWKYLHELEDKNLYRHKKDDLNSFLAMMALAAFDGDIELSRALYYLFIAKKYKTLCANWKGNILVDQDTIWKSTLMPEMLNYLMLAYARFDPRNLPVLSGYEKGIELRRKFLREFDSSMRLDDTDKLVKFKLPFLPISDLNSEAQVLAESNAIWSFNLENGGTRNTLTSSNEAALEDIKKYRQLLDSFAQEAEDFNEFKFKVMYEVTKMQRESINVNVFNKISLHTYLSIPINLKQQKEFLRRLTFFTFQQHEFEAVIKRLYEGYRNIPSSHTRDQNSISTEAISVSKPETTEDLNLIMHDIWYITCLRHKIMMDTTLYELVMKAAIEFQNEDLAKKVWNDRGKFRTTVPFLKMDQRIRIAKDQKFAHLMVEFFTKQGKYSDAIAIILSSKNRFNWTYSMVRNLHKALEEIEDRNSVEILLDVVNKKSHAKALKWEEQELNM.

Residues 1–76 constitute a mitochondrion transit peptide; sequence MYMARCGPKN…REFSNTLKER (76 aa). PPR repeat units follow at residues 319–353 and 356–390; these read NKQN…STKH and DICT…NIKP.

This sequence belongs to the CCM1 family. In terms of assembly, binds to mitochondrial small subunit 15S rRNA.

It localises to the mitochondrion. Regulates mitochondrial small subunit maturation by controlling 15S rRNA 5'-end processing. Localizes to the 5' precursor of the 15S rRNA in a position that is subsequently occupied by mS47 in the mature yeast mtSSU. Uses structure and sequence-specific RNA recognition, binding to a single-stranded region of the precursor and specifically recognizing bases -6 to -1. The exchange of Ccm1 for mS47 is coupled to the irreversible removal of precursor rRNA that is accompanied by conformational changes of the mitoribosomal proteins uS5m and mS26. These conformational changes signal completion of 5'-end rRNA processing through protection of the mature 5'-end of the 15S rRNA and stabilization of mS47. The removal of the 5' precursor together with the dissociation of Ccm1 may be catalyzed by the 5'-3' exoribonuclease Pet127. Involved in the specific removal of group I introns in mitochondrial encoded transcripts. In Saccharomyces cerevisiae (strain Lalvin EC1118 / Prise de mousse) (Baker's yeast), this protein is Mitochondrial 15S rRNA processing factor CCM1 (CCM1).